The primary structure comprises 354 residues: Arginase-2, mitochondrial (354 aa).

The transit peptide at 1-22 (MFLRSSASRLLHGQIPCVLTRS) directs the protein to the mitochondrion. Mn(2+)-binding residues include His-120, Asp-143, His-145, and Asp-147. Residues 145 to 149 (HADIN), 156 to 158 (SGN), and Glu-202 each bind substrate. Residues Asp-251 and Asp-253 each contribute to the Mn(2+) site. Substrate-binding residues include Thr-265 and Glu-296.

The protein belongs to the arginase family. As to quaternary structure, homotrimer. Mn(2+) serves as cofactor.

It is found in the mitochondrion. The enzyme catalyses L-arginine + H2O = urea + L-ornithine. It functions in the pathway nitrogen metabolism; urea cycle; L-ornithine and urea from L-arginine: step 1/1. Its function is as follows. May play a role in the regulation of extra-urea cycle arginine metabolism and also in down-regulation of nitric oxide synthesis. Extrahepatic arginase functions to regulate L-arginine bioavailability to nitric oxid synthase (NOS). Arginine metabolism is a critical regulator of innate and adaptive immune responses. Seems to be involved in negative regulation of the survival capacity of activated CD4(+) and CD8(+) T cells. May suppress inflammation-related signaling in asthmatic airway epithelium. May contribute to the immune evasion of H.pylori by restricting M1 macrophage activation and polyamine metabolism. May play a role in promoting prenatal immune suppression. Regulates RPS6KB1 signaling, which promotes endothelial cell senescence and inflammation and implicates NOS3/eNOS dysfunction. Can inhibit endothelial autophagy independently of its enzymatic activity implicating mTORC2 signaling. Involved in vascular smooth muscle cell senescence and apoptosis independently of its enzymatic activity. This is Arginase-2, mitochondrial (Arg2) from Mus musculus (Mouse).